We begin with the raw amino-acid sequence, 852 residues long: Pentatricopeptide repeat-containing protein At5g02830, chloroplastic (852 aa).

A chloroplast-targeting transit peptide spans 1 to 25; sequence MRDFVIVFGSSSAITNPHHHHRRCY. The segment at 17 to 60 is disordered; that stretch reads PHHHHRRCYATAPESNRKTKSNSSFTKLLPSLPQQHSPSPASVS. Residues 44–58 are compositionally biased toward low complexity; that stretch reads LLPSLPQQHSPSPAS. 8 PPR repeats span residues 334 to 364, 373 to 407, 408 to 442, 443 to 477, 525 to 557, 558 to 592, 593 to 627, and 628 to 665; these read DMTS…AKRM, DAFT…GVTP, NTHT…GCEP, NSQC…SVNE, TTAT…GLSP, NQIT…GTRP, DVVA…QIKP, and NWVT…GYKP.

It belongs to the PPR family. P subfamily.

It localises to the plastid. Its subcellular location is the chloroplast. This Arabidopsis thaliana (Mouse-ear cress) protein is Pentatricopeptide repeat-containing protein At5g02830, chloroplastic.